The chain runs to 585 residues: MNIFKNFEKKIKKSIELSDIKGKNGEDLDLSKITVDPPRDSSHGHLSTNAAMVLAKSIGLSPRALADKIIELLKNDISIENIDVAGPGFINIKLTKLFWQDAVKYMLELGLSYGRIPMGQGKRINVEYVSANPTGPMHVGHCRGAVVGDVLSNLLQFAGYNITKEYYINDAGQQIEVLAHSVLLRYREALGQKINEIPEGLYPGEYLIPLGQALAQEFGDQLLTMDRDEALSIVKERAIHTMMSMIREDLAALNIYHDIFFSERMLYADNARAIRNTINDLTLNGYIYKGKLPPPKGQNIEDWEPSEQTLFRSTNVGDDQDRVLIKSDGSYTYFAADVAYFRDKFNRHFDEMIYILGADHAGYVKRLEAMAKAISGNKAKLSVFLCQLVKLFRNGQPVRMSKRAGSFVTLRDVVEEVGRDPVRFMMLYRKCEAPLDFDFAKVTEQSKDNPIFYVQYANARCHSVFRQAQEVLHIESFSNDILITYLHRLIDDNEILLIRKLSEYPRIIEQAVVHKEPHRLAFYLYDLASCFHTHWNKGSENLNLRFIQPHDKELSFARLGLIQAVINILSSGLSIIGVEAPIEMR.

A 'HIGH' region motif is present at residues 131 to 141 (ANPTGPMHVGH).

This sequence belongs to the class-I aminoacyl-tRNA synthetase family. As to quaternary structure, monomer.

It is found in the cytoplasm. It carries out the reaction tRNA(Arg) + L-arginine + ATP = L-arginyl-tRNA(Arg) + AMP + diphosphate. This Bartonella tribocorum (strain CIP 105476 / IBS 506) protein is Arginine--tRNA ligase.